A 207-amino-acid chain; its full sequence is SPRY domain-containing protein 4 (207 aa).

The B30.2/SPRY domain occupies Tyr-12–Leu-207. Residues Lys-53 and Lys-130 each carry the N6-acetyllysine modification. Lys-139 bears the N6-succinyllysine mark.

This is SPRY domain-containing protein 4 (Spryd4) from Mus musculus (Mouse).